The sequence spans 360 residues: UDP-N-acetylglucosamine--N-acetylmuramyl-(pentapeptide) pyrophosphoryl-undecaprenol N-acetylglucosamine transferase (360 aa).

Residues 12–14 (TAG), Ser-198, and Gln-289 each bind UDP-N-acetyl-alpha-D-glucosamine.

This sequence belongs to the glycosyltransferase 28 family. MurG subfamily.

It is found in the cell membrane. The enzyme catalyses Mur2Ac(oyl-L-Ala-gamma-D-Glu-L-Lys-D-Ala-D-Ala)-di-trans,octa-cis-undecaprenyl diphosphate + UDP-N-acetyl-alpha-D-glucosamine = beta-D-GlcNAc-(1-&gt;4)-Mur2Ac(oyl-L-Ala-gamma-D-Glu-L-Lys-D-Ala-D-Ala)-di-trans,octa-cis-undecaprenyl diphosphate + UDP + H(+). It participates in cell wall biogenesis; peptidoglycan biosynthesis. Its function is as follows. Cell wall formation. Catalyzes the transfer of a GlcNAc subunit on undecaprenyl-pyrophosphoryl-MurNAc-pentapeptide (lipid intermediate I) to form undecaprenyl-pyrophosphoryl-MurNAc-(pentapeptide)GlcNAc (lipid intermediate II). The chain is UDP-N-acetylglucosamine--N-acetylmuramyl-(pentapeptide) pyrophosphoryl-undecaprenol N-acetylglucosamine transferase from Streptococcus equi subsp. zooepidemicus (strain MGCS10565).